A 113-amino-acid chain; its full sequence is uncharacterized protein (113 aa).

An N-terminal signal peptide occupies residues 1-16 (MKCLVVLTALFGISTA). Residues 81 to 101 (GGNGGNGGGGNGGNNGNGNGN) show a composition bias toward gly residues. A disordered region spans residues 81 to 103 (GGNGGNGGGGNGGNNGNGNGNNG).

As to expression, nacreous layer of shell (at protein level).

The protein resides in the secreted. This is an uncharacterized protein from Margaritifera margaritifera (Freshwater pearl mussel).